Reading from the N-terminus, the 139-residue chain is Antitoxin HicB 2 (139 aa).

An HTH cro/C1-type domain is found at 87-137 (MLQTRTSNAELARLLGTRPQEIQRIVSLSHSTKIDTIANALNALGKHLELV). Residues 96-113 (ELARLLGTRPQEIQRIVS) constitute a DNA-binding region (H-T-H motif).

It belongs to the HicB antitoxin family. Probably forms a complex with the probable mRNA interferase HicA2 (its cognate toxin); when complexed with HicA inhibits the toxin activity.

Antitoxin component of a type II toxin-antitoxin (TA) system. Functions as an mRNA interferase antitoxin preventing effects of the HicA 2 toxin. This chain is Antitoxin HicB 2 (hicB2), found in Photorhabdus laumondii subsp. laumondii (strain DSM 15139 / CIP 105565 / TT01) (Photorhabdus luminescens subsp. laumondii).